The primary structure comprises 828 residues: Translation initiation factor IF-2 (828 aa).

Disordered regions lie at residues 48–76 (SYSG…SEEF) and 112–137 (ASQE…EPKI). The span at 49-58 (YSGSTTTLSL) shows a compositional bias: polar residues. Residues 65–74 (LETGSSSGSE) are compositionally biased toward low complexity. Acidic residues predominate over residues 116-126 (DPIEVEQEESS). Residues 127–137 (DTNKVKEEPKI) show a composition bias toward basic and acidic residues. The 171-residue stretch at 326 to 496 (SRAPVVTVMG…LLIAEMQNLK (171 aa)) folds into the tr-type G domain. The tract at residues 335–342 (GHVDHGKT) is G1. 335–342 (GHVDHGKT) provides a ligand contact to GTP. The tract at residues 360 to 364 (GITQH) is G2. A G3 region spans residues 382–385 (DTPG). GTP is bound by residues 382-386 (DTPGH) and 436-439 (NKID). The interval 436 to 439 (NKID) is G4. A G5 region spans residues 472-474 (SAL).

It belongs to the TRAFAC class translation factor GTPase superfamily. Classic translation factor GTPase family. IF-2 subfamily.

The protein localises to the cytoplasm. Its function is as follows. One of the essential components for the initiation of protein synthesis. Protects formylmethionyl-tRNA from spontaneous hydrolysis and promotes its binding to the 30S ribosomal subunits. Also involved in the hydrolysis of GTP during the formation of the 70S ribosomal complex. This is Translation initiation factor IF-2 from Rickettsia bellii (strain RML369-C).